The following is a 415-amino-acid chain: Serine--tRNA ligase (415 aa).

231-233 contacts L-serine; that stretch reads TAE. ATP is bound at residue 262–264; the sequence is RSE. Glu285 provides a ligand contact to L-serine. 349-352 lines the ATP pocket; it reads EISS. Ser383 contacts L-serine.

The protein belongs to the class-II aminoacyl-tRNA synthetase family. Type-1 seryl-tRNA synthetase subfamily. In terms of assembly, homodimer. The tRNA molecule binds across the dimer.

Its subcellular location is the cytoplasm. The catalysed reaction is tRNA(Ser) + L-serine + ATP = L-seryl-tRNA(Ser) + AMP + diphosphate + H(+). It catalyses the reaction tRNA(Sec) + L-serine + ATP = L-seryl-tRNA(Sec) + AMP + diphosphate + H(+). The protein operates within aminoacyl-tRNA biosynthesis; selenocysteinyl-tRNA(Sec) biosynthesis; L-seryl-tRNA(Sec) from L-serine and tRNA(Sec): step 1/1. Catalyzes the attachment of serine to tRNA(Ser). Is also able to aminoacylate tRNA(Sec) with serine, to form the misacylated tRNA L-seryl-tRNA(Sec), which will be further converted into selenocysteinyl-tRNA(Sec). This Helicobacter pylori (strain HPAG1) protein is Serine--tRNA ligase.